A 245-amino-acid polypeptide reads, in one-letter code: Ribonuclease PH (245 aa).

Phosphate is bound by residues Arg-86 and Gly-124–Arg-126.

Belongs to the RNase PH family. As to quaternary structure, homohexameric ring arranged as a trimer of dimers. It has been suggested that the active form is the dimer which binds tRNA and that the hexameric form protects the substrate recognition loop (approximately residues 65-82) from proteolysis.

It carries out the reaction tRNA(n+1) + phosphate = tRNA(n) + a ribonucleoside 5'-diphosphate. Functionally, phosphorolytic 3'-5' exoribonuclease that plays an important role in tRNA 3'-end maturation. Removes nucleotide residues following the 3'-CCA terminus of tRNAs; can also add nucleotides to the ends of RNA molecules by using nucleoside diphosphates as substrates, but this may not be physiologically important. Probably plays a role in initiation of 16S rRNA degradation (leading to ribosome degradation) during starvation. Plays a role in the secondary pathway of 23S rRNA 3' end maturation. This chain is Ribonuclease PH, found in Bacillus subtilis (strain 168).